Here is a 407-residue protein sequence, read N- to C-terminus: Betaine--homocysteine S-methyltransferase 1 (407 aa).

A Hcy-binding domain is found at arginine 11–leucine 314. Lysine 40, lysine 93, and lysine 98 each carry N6-succinyllysine. Cysteine 217 contributes to the Zn(2+) binding site. N6-succinyllysine is present on residues lysine 232 and lysine 241. Residues cysteine 299 and cysteine 300 each contribute to the Zn(2+) site. Serine 330 carries the post-translational modification Phosphoserine. N6-succinyllysine is present on residues lysine 340 and lysine 377.

Homotetramer. The cofactor is Zn(2+). Highly expressed in liver and kidney (at protein level). Expressed at lower levels in testis, lung, cerebellum, skeletal muscle and pancreas (at protein level).

It is found in the cytoplasm. The protein resides in the cytosol. It localises to the nucleus. The enzyme catalyses L-homocysteine + glycine betaine = N,N-dimethylglycine + L-methionine. Its pathway is amine and polyamine degradation; betaine degradation; sarcosine from betaine: step 1/2. It functions in the pathway amino-acid biosynthesis; L-methionine biosynthesis via de novo pathway; L-methionine from L-homocysteine (BhmT route): step 1/1. Its function is as follows. Involved in the regulation of homocysteine metabolism. Converts betaine and homocysteine to dimethylglycine and methionine, respectively. This reaction is also required for the irreversible oxidation of choline. This Rattus norvegicus (Rat) protein is Betaine--homocysteine S-methyltransferase 1.